The chain runs to 180 residues: Adenine phosphoribosyltransferase (180 aa).

S2 is modified (N-acetylserine). A phosphoserine mark is found at S15 and S30. Phosphotyrosine is present on Y60. A Phosphoserine modification is found at S66. K114 carries the N6-acetyllysine modification. At T135 the chain carries Phosphothreonine.

Belongs to the purine/pyrimidine phosphoribosyltransferase family. As to quaternary structure, homodimer.

Its subcellular location is the cytoplasm. The catalysed reaction is AMP + diphosphate = 5-phospho-alpha-D-ribose 1-diphosphate + adenine. The protein operates within purine metabolism; AMP biosynthesis via salvage pathway; AMP from adenine: step 1/1. In terms of biological role, catalyzes a salvage reaction resulting in the formation of AMP, that is energically less costly than de novo synthesis. The chain is Adenine phosphoribosyltransferase from Mus musculus (Mouse).